Reading from the N-terminus, the 287-residue chain is ATP phosphoribosyltransferase (287 aa).

It belongs to the ATP phosphoribosyltransferase family. Long subfamily. Mg(2+) is required as a cofactor.

The protein resides in the cytoplasm. The enzyme catalyses 1-(5-phospho-beta-D-ribosyl)-ATP + diphosphate = 5-phospho-alpha-D-ribose 1-diphosphate + ATP. It functions in the pathway amino-acid biosynthesis; L-histidine biosynthesis; L-histidine from 5-phospho-alpha-D-ribose 1-diphosphate: step 1/9. Its activity is regulated as follows. Feedback inhibited by histidine. Catalyzes the condensation of ATP and 5-phosphoribose 1-diphosphate to form N'-(5'-phosphoribosyl)-ATP (PR-ATP). Has a crucial role in the pathway because the rate of histidine biosynthesis seems to be controlled primarily by regulation of HisG enzymatic activity. In Methanothermobacter thermautotrophicus (strain ATCC 29096 / DSM 1053 / JCM 10044 / NBRC 100330 / Delta H) (Methanobacterium thermoautotrophicum), this protein is ATP phosphoribosyltransferase (hisG).